Consider the following 209-residue polypeptide: Large ribosomal subunit protein uL3 (209 aa).

Belongs to the universal ribosomal protein uL3 family. As to quaternary structure, part of the 50S ribosomal subunit. Forms a cluster with proteins L14 and L19.

One of the primary rRNA binding proteins, it binds directly near the 3'-end of the 23S rRNA, where it nucleates assembly of the 50S subunit. The polypeptide is Large ribosomal subunit protein uL3 (Clostridium tetani (strain Massachusetts / E88)).